Reading from the N-terminus, the 344-residue chain is Uroporphyrinogen decarboxylase (344 aa).

Residues 26 to 30 (RQAGR), Asp76, Tyr152, Ser207, and His323 contribute to the substrate site.

It belongs to the uroporphyrinogen decarboxylase family. As to quaternary structure, homodimer.

The protein resides in the cytoplasm. The enzyme catalyses uroporphyrinogen III + 4 H(+) = coproporphyrinogen III + 4 CO2. It participates in porphyrin-containing compound metabolism; protoporphyrin-IX biosynthesis; coproporphyrinogen-III from 5-aminolevulinate: step 4/4. In terms of biological role, catalyzes the decarboxylation of four acetate groups of uroporphyrinogen-III to yield coproporphyrinogen-III. The sequence is that of Uroporphyrinogen decarboxylase from Hyphomonas neptunium (strain ATCC 15444).